Here is a 160-residue protein sequence, read N- to C-terminus: Surface-adhesin protein E (160 aa).

Positions 1–15 (MKKIILTLSLGLLTA) are cleaved as a signal peptide. C16 carries N-palmitoyl cysteine lipidation. C16 carries the S-diacylglycerol cysteine lipid modification.

It is found in the cell outer membrane. The protein resides in the cell surface. Acts as a multifunctional adhesin involved in direct interactions with host epithelial cells and host proteins. This chain is Surface-adhesin protein E (pe), found in Haemophilus influenzae (strain ATCC 51907 / DSM 11121 / KW20 / Rd).